We begin with the raw amino-acid sequence, 102 residues long: MAALNGLVLLLLTISAMFISECYSSGESQSIQRKGQCEEVICHRKLNHLGERVTSGCPTGCLCVIREPDNVDNANGTCYALMSSTTTTTTTPDGTTTSEEEE.

An N-terminal signal peptide occupies residues 1–24 (MAALNGLVLLLLTISAMFISECYS). Intrachain disulfides connect C37–C61, C42–C63, and C57–C78.

This sequence belongs to the RaCI family. Expressed in salivary glands.

It localises to the secreted. Functionally, complement inhibitor. Prevents complement-mediated C5 activation by binding to C5. Binds C5 at a different binding site than the other tick complement inhibitors OmCI and CirpT1, and the drug eculizumab. Inhibits complement in human and guinea pig but not in other species tested (rabbit, rat, mouse, and pig). The protein is Complement inhibitor RaCI3 of Dermacentor andersoni (Rocky mountain wood tick).